Here is a 61-residue protein sequence, read N- to C-terminus: uncharacterized protein (61 aa).

A signal peptide spans 1–28 (MHRRARRMPMRPRRSKRVRNRYTMGTFA).

This is an uncharacterized protein from Mycobacterium tuberculosis (strain ATCC 25618 / H37Rv).